A 421-amino-acid polypeptide reads, in one-letter code: Putative nickel insertion protein (421 aa).

This sequence belongs to the LarC family.

This chain is Putative nickel insertion protein, found in Gloeobacter violaceus (strain ATCC 29082 / PCC 7421).